A 498-amino-acid chain; its full sequence is Pre-glycoprotein polyprotein GP complex (498 aa).

A lipid anchor (N-myristoyl glycine; by host) is attached at Gly-2. At 2–17 (GQIVTMFEALPHIIDE) the chain is on the extracellular side. Residues 18 to 33 (VINIVIIVLIIITSIK) form a helical membrane-spanning segment. The Cytoplasmic segment spans residues 34–58 (AVYNFATCGILALVSFLFLAGRSCG). Cys-57 serves as a coordination point for Zn(2+). Over 59–438 (MYGLNGPDIY…QGSTPLALMD (380 aa)) the chain is Extracellular. Residues Asn-85, Asn-95, Asn-114, Asn-124, and Asn-171 are each glycosylated (N-linked (GlcNAc...) asparagine; by host). Disulfide bonds link Cys-92/Cys-239, Cys-123/Cys-160, Cys-184/Cys-220, Cys-285/Cys-298, Cys-307/Cys-316, and Cys-370/Cys-391. N-linked (GlcNAc...) asparagine; by host glycosylation occurs at Asn-232. N-linked (GlcNAc...) asparagine; by host glycosylation is found at Asn-371, Asn-396, and Asn-401. The helical transmembrane segment at 439–459 (LLMFSTSAYLISIFLHFVRIP) threads the bilayer. Topologically, residues 460-498 (THRHIKGGSCPKPHRLTNKGICSCGAFKVPGVKTIWKRR) are cytoplasmic. Residues His-461, His-463, Cys-469, His-473, Cys-481, and Cys-483 each contribute to the Zn(2+) site.

This sequence belongs to the arenaviridae GPC protein family. In terms of assembly, interacts with glycoprotein G2. Part of the GP complex (GP-C) together with glycoprotein G1 and glycoprotein G2. The GP-complex interacts with protein Z, which interacts with ribonucleocapsid; these interactions may induce virion budding. As to quaternary structure, homotrimer; disulfide-linked. In pre-fusion state, G1 homotrimers bind G2 homotrimers via ionic interactions. Part of the GP complex (GP-C) together with glycoprotein G2 and the stable signal peptide. Interacts with the primary host receptor DAG1 on the cell surface. The GP-complex interacts with protein Z, which interacts with ribonucleocapsid; these interactions may induce virion budding. Homotrimer. Interacts with the stable signal peptide. In pre-fusion state, G2 homotrimers bind G1 homotrimers via ionic interactions. Part of the GP complex (GP-C) together with glycoprotein G1 and the stable signal peptide. Acidification in the endosome triggers rearrangements, which ultimately leads to a 6 helix bundle formed by the two heptad repeat domains (HR1 and HR2) in post-fusion state. The GP-complex interacts with protein Z, which interacts with ribonucleocapsid; these interactions may induce virion budding. Specific enzymatic cleavages in vivo yield mature proteins. GP-C polyprotein is cleaved in the endoplasmic reticulum by the host protease MBTPS1. Only cleaved glycoprotein is incorporated into virions. Post-translationally, the SSP remains stably associated with the GP complex following cleavage by signal peptidase and plays crucial roles in the trafficking of GP through the secretory pathway. In terms of processing, myristoylation is necessary for GP2-mediated fusion activity.

It localises to the virion membrane. The protein resides in the host endoplasmic reticulum membrane. Its subcellular location is the host Golgi apparatus membrane. The protein localises to the host cell membrane. In terms of biological role, functions as a cleaved signal peptide that is retained as the third component of the GP complex (GP-C). Helps to stabilize the spike complex in its native conformation. The SSP is required for efficient glycoprotein expression, post-translational maturation cleavage of G1 and G2, glycoprotein transport to the cell surface plasma membrane, formation of infectious virus particles, and acid pH-dependent glycoprotein-mediated cell fusion. Forms the virion spikes together with glycoprotein G2. The glycoprotein spike trimers are connected to the underlying matrix. Interacts with the host receptor. Mediates virus attachment to the host primary receptor alpha-dystroglycan DAG1 (alpha-DG) at the cell surface. Down-modulates host DAG1. Functionally, forms the virion spikes together with glycoprotein G1. The glycoprotein spike trimers are connected to the underlying matrix. Class I viral fusion protein that directs fusion of viral and host endosomal membranes, leading to delivery of the nucleocapsid into the cytoplasm. Membrane fusion is mediated by irreversible conformational changes induced by acidification. The chain is Pre-glycoprotein polyprotein GP complex from Homo sapiens (Human).